We begin with the raw amino-acid sequence, 61 residues long: Large ribosomal subunit protein bL28 (61 aa).

Residues Met-1–Arg-26 form a disordered region. Residues Lys-9 to His-19 are compositionally biased toward basic residues.

It belongs to the bacterial ribosomal protein bL28 family.

In Levilactobacillus brevis (strain ATCC 367 / BCRC 12310 / CIP 105137 / JCM 1170 / LMG 11437 / NCIMB 947 / NCTC 947) (Lactobacillus brevis), this protein is Large ribosomal subunit protein bL28.